A 507-amino-acid polypeptide reads, in one-letter code: Maturase K (507 aa).

It belongs to the intron maturase 2 family. MatK subfamily.

It localises to the plastid. The protein resides in the chloroplast. Functionally, usually encoded in the trnK tRNA gene intron. Probably assists in splicing its own and other chloroplast group II introns. The chain is Maturase K from Annona muricata (Soursop).